Here is a 412-residue protein sequence, read N- to C-terminus: Multifunctional CCA protein (412 aa).

Residues Gly8 and Arg11 each contribute to the ATP site. Positions 8 and 11 each coordinate CTP. Mg(2+) is bound by residues Asp21 and Asp23. Residues Arg91, Arg137, and Arg140 each contribute to the ATP site. 3 residues coordinate CTP: Arg91, Arg137, and Arg140. Positions 228 to 329 constitute an HD domain; that stretch reads TGIHTLMTLS…VKLFDSIDAW (102 aa).

It belongs to the tRNA nucleotidyltransferase/poly(A) polymerase family. Bacterial CCA-adding enzyme type 1 subfamily. As to quaternary structure, monomer. Can also form homodimers and oligomers. It depends on Mg(2+) as a cofactor. Requires Ni(2+) as cofactor.

It carries out the reaction a tRNA precursor + 2 CTP + ATP = a tRNA with a 3' CCA end + 3 diphosphate. The enzyme catalyses a tRNA with a 3' CCA end + 2 CTP + ATP = a tRNA with a 3' CCACCA end + 3 diphosphate. Its function is as follows. Catalyzes the addition and repair of the essential 3'-terminal CCA sequence in tRNAs without using a nucleic acid template. Adds these three nucleotides in the order of C, C, and A to the tRNA nucleotide-73, using CTP and ATP as substrates and producing inorganic pyrophosphate. tRNA 3'-terminal CCA addition is required both for tRNA processing and repair. Also involved in tRNA surveillance by mediating tandem CCA addition to generate a CCACCA at the 3' terminus of unstable tRNAs. While stable tRNAs receive only 3'-terminal CCA, unstable tRNAs are marked with CCACCA and rapidly degraded. This chain is Multifunctional CCA protein, found in Escherichia coli (strain K12 / MC4100 / BW2952).